We begin with the raw amino-acid sequence, 160 residues long: Lipoprotein signal peptidase (160 aa).

Transmembrane regions (helical) follow at residues 7-27, 39-59, 62-82, and 96-116; these read WFWL…YITV, LWPG…FSFF, GAVW…FLGW, and GFIL…GYVV. Active-site residues include aspartate 117 and aspartate 133. The chain crosses the membrane as a helical span at residues 126–146; sequence FPVFNLADTFINIGIFFLLLA.

The protein belongs to the peptidase A8 family.

It is found in the cell inner membrane. The enzyme catalyses Release of signal peptides from bacterial membrane prolipoproteins. Hydrolyzes -Xaa-Yaa-Zaa-|-(S,diacylglyceryl)Cys-, in which Xaa is hydrophobic (preferably Leu), and Yaa (Ala or Ser) and Zaa (Gly or Ala) have small, neutral side chains.. It participates in protein modification; lipoprotein biosynthesis (signal peptide cleavage). Functionally, this protein specifically catalyzes the removal of signal peptides from prolipoproteins. This Gloeothece citriformis (strain PCC 7424) (Cyanothece sp. (strain PCC 7424)) protein is Lipoprotein signal peptidase.